Reading from the N-terminus, the 166-residue chain is Large ribosomal subunit protein uL10 (166 aa).

The protein belongs to the universal ribosomal protein uL10 family. As to quaternary structure, part of the ribosomal stalk of the 50S ribosomal subunit. The N-terminus interacts with L11 and the large rRNA to form the base of the stalk. The C-terminus forms an elongated spine to which L12 dimers bind in a sequential fashion forming a multimeric L10(L12)X complex.

Its function is as follows. Forms part of the ribosomal stalk, playing a central role in the interaction of the ribosome with GTP-bound translation factors. This chain is Large ribosomal subunit protein uL10, found in Lactobacillus johnsonii (strain CNCM I-12250 / La1 / NCC 533).